Here is a 603-residue protein sequence, read N- to C-terminus: ATP-dependent RNA helicase MRH4, mitochondrial (603 aa).

The transit peptide at 1-71 directs the protein to the mitochondrion; sequence MISTGLPLFT…GNGAGAGARV (71 aa). The Q motif motif lies at 151-158; it reads VIKPTPVQ. The Helicase ATP-binding domain maps to 193–409; the sequence is KNEEQKTKIF…LRLFPDQKSL (217 aa). 206 to 213 is a binding site for ATP; sequence AETGSGKT. Residues 357–360 carry the DEAD box motif; the sequence is DEAD. One can recognise a Helicase C-terminal domain in the interval 443–603; sequence CLAQAIYAIS…SAIMKGSRIG (161 aa).

This sequence belongs to the DEAD box helicase family. MRH4 subfamily.

It localises to the mitochondrion. The catalysed reaction is ATP + H2O = ADP + phosphate + H(+). ATP-binding RNA helicase involved in mitochondrial RNA metabolism. Required for maintenance of mitochondrial DNA. The protein is ATP-dependent RNA helicase MRH4, mitochondrial (MRH4) of Lodderomyces elongisporus (strain ATCC 11503 / CBS 2605 / JCM 1781 / NBRC 1676 / NRRL YB-4239) (Yeast).